We begin with the raw amino-acid sequence, 504 residues long: Peptidyl-prolyl cis-trans isomerase CYP57 (504 aa).

At S2 the chain carries N-acetylserine. The PPIase cyclophilin-type domain occupies 16–167; it reads IVNTTHGPID…DPAPKILSVE (152 aa). Positions 204–274 form a coiled coil; it reads NLLSFGEEAE…AKKEAAQKDK (71 aa). Composition is skewed to basic and acidic residues over residues 237–275, 344–354, and 364–374; these read RLLK…KDKS, EDEKPRMEKLS, and AKAEHMEKGDT. Disordered regions lie at residues 237 to 374, 416 to 441, and 482 to 504; these read RLLK…KGDT, AKPF…KEED, and EKFN…KSLA. Positions 416-434 are enriched in polar residues; it reads AKPFTSSNEPVVLTSSSEP. Basic and acidic residues predominate over residues 494–504; that stretch reads REREWSGKSLA.

This sequence belongs to the cyclophilin-type PPIase family. In terms of tissue distribution, ubiquitous.

The protein localises to the nucleus. It localises to the cytoplasm. It carries out the reaction [protein]-peptidylproline (omega=180) = [protein]-peptidylproline (omega=0). Its function is as follows. PPIases accelerate the folding of proteins. It catalyzes the cis-trans isomerization of proline imidic peptide bonds in oligopeptides. Involved in plant response to pathogen infection by increasing PAD4 expression in absence of EDS1 up-regulation. This Arabidopsis thaliana (Mouse-ear cress) protein is Peptidyl-prolyl cis-trans isomerase CYP57 (CYP57).